The sequence spans 360 residues: S-adenosylmethionine decarboxylase proenzyme (360 aa).

Catalysis depends on residues Glu-13 and Glu-16. Ser-73 serves as the catalytic Schiff-base intermediate with substrate; via pyruvic acid. Ser-73 is subject to Pyruvic acid (Ser); by autocatalysis. Cys-87 (proton donor; for catalytic activity) is an active-site residue. Active-site proton acceptor; for processing activity residues include Ser-236 and His-249.

The protein belongs to the eukaryotic AdoMetDC family. Pyruvate serves as cofactor. In terms of processing, is synthesized initially as an inactive proenzyme. Formation of the active enzyme involves a self-maturation process in which the active site pyruvoyl group is generated from an internal serine residue via an autocatalytic post-translational modification. Two non-identical subunits are generated from the proenzyme in this reaction, and the pyruvate is formed at the N-terminus of the alpha chain, which is derived from the carboxyl end of the proenzyme. The post-translation cleavage follows an unusual pathway, termed non-hydrolytic serinolysis, in which the side chain hydroxyl group of the serine supplies its oxygen atom to form the C-terminus of the beta chain, while the remainder of the serine residue undergoes an oxidative deamination to produce ammonia and the pyruvoyl group blocking the N-terminus of the alpha chain. As to expression, stolon, also expressed in leaves, stems and roots.

It carries out the reaction S-adenosyl-L-methionine + H(+) = S-adenosyl 3-(methylsulfanyl)propylamine + CO2. The protein operates within amine and polyamine biosynthesis; S-adenosylmethioninamine biosynthesis; S-adenosylmethioninamine from S-adenosyl-L-methionine: step 1/1. The chain is S-adenosylmethionine decarboxylase proenzyme (SAMDC) from Solanum tuberosum (Potato).